The primary structure comprises 429 residues: Apolipoprotein A-IV (429 aa).

Residues 1–20 (MFLKAVVLTLALVAVTGARA) form the signal peptide. 13 tandem repeats follow at residues 33 to 54 (DYFSQLSSNAKEAVEHLQKSEL), 60 to 81 (ALFQDKLGEVNTYAGDLQKKLV), 82 to 103 (PFATELHERLAKDSEKLKEEIR), 115 to 136 (PHANEVSQKIGENVRELQQRLE), 137 to 158 (PYTDQLRTQVNTQTEQLRRQLT), 159 to 180 (PYAQRMERVLRENADSLQTSLR), 181 to 202 (PHADQLKAKIDQNVEELKERLT), 203 to 224 (PYADEFKVKIDQTVEELRRSLA), 225 to 246 (PYAQDAQEKLNHQLEGLAFQMK), 247 to 268 (KNAEELKARISASAEELRQRLA), 269 to 286 (PLAEDMRGNLRGNTEGLQ), 287 to 308 (KSLAELGGHLDRHVEEFRLRVE), and 309 to 330 (PYGENFNKALVQQMEQLRQKLG). The 13 X 22 AA approximate tandem repeats stretch occupies residues 33 to 330 (DYFSQLSSNA…QMEQLRQKLG (298 aa)). Residues 359–429 (KEKESQDNTL…QVQMLAPLES (71 aa)) form a disordered region. Over residues 381–420 (QEQQQEQEQEQQQQQEQQQQQEQQREQQQQEQQQEQQQEQ) the composition is skewed to low complexity.

It belongs to the apolipoprotein A1/A4/E family. As to quaternary structure, homodimer. Phosphorylation sites are present in the extracellular medium. As to expression, secreted in plasma.

Its subcellular location is the secreted. Functionally, may have a role in chylomicrons and VLDL secretion and catabolism. Required for efficient activation of lipoprotein lipase by ApoC-II; potent activator of LCAT. Apoa-IV is a major component of HDL and chylomicrons. This is Apolipoprotein A-IV (APOA4) from Macaca fascicularis (Crab-eating macaque).